Reading from the N-terminus, the 362-residue chain is Sphingosine 1-phosphate receptor 1 (362 aa).

Topologically, residues 1 to 25 are extracellular; the sequence is MDDLIARHYNFTGKFRKVHKDPGLK. N-linked (GlcNAc...) asparagine glycosylation occurs at N10. Residues 26–47 traverse the membrane as a helical segment; the sequence is ADSVVFIIVCCFIILENVLVLL. The Cytoplasmic segment spans residues 48–61; it reads TIWRTKKFHKPMYY. A helical membrane pass occupies residues 62-83; the sequence is FIGNLALSDLLAGVVYTANILL. The Extracellular portion of the chain corresponds to 84–95; it reads SGANTYKLTPTQ. A helical membrane pass occupies residues 96–117; that stretch reads WFFREGSMFVALAASVFSLLAI. Sphing-4-enine 1-phosphate is bound at residue 99–100; the sequence is RE. The Cytoplasmic segment spans residues 118–139; the sequence is AIERHLTMLKMKLHNNGKTCRV. A helical membrane pass occupies residues 140-161; sequence FMLISTVWFIAAILGGLPVMGW. The Extracellular portion of the chain corresponds to 162 to 175; the sequence is NCIDSMNNCSTVLP. C163 and C170 form a disulfide bridge. The N-linked (GlcNAc...) asparagine glycan is linked to N169. The helical transmembrane segment at 176-203 threads the bilayer; the sequence is LYHKAYILFCTTVFSVILMAIVILYARI. The Cytoplasmic portion of the chain corresponds to 204–238; that stretch reads YALVRTRSRKLVFRKVANGRGSNKSSEKSMALLKT. Residues 239 to 259 traverse the membrane as a helical segment; the sequence is VIIVLSCFIACWAPLFILLLL. 246-250 is a sphing-4-enine 1-phosphate binding site; the sequence is FIACW. Residues 260–270 are Extracellular-facing; that stretch reads DVACQTLTCSI. A disulfide bridge connects residues C263 and C268. A helical membrane pass occupies residues 271-291; that stretch reads LYKAEWFLALAVLNSAMNPLI. Topologically, residues 292–362 are cytoplasmic; the sequence is YTLTSNEMRR…VSSGNITSSS (71 aa). C309 carries the S-palmitoyl cysteine lipid modification. The disordered stretch occupies residues 328–362; sequence FSRSKSDNSSHPNKDEPEYSPRETIVSSGNITSSS. Residues 329-348 are compositionally biased toward basic and acidic residues; that stretch reads SRSKSDNSSHPNKDEPEYSP. Over residues 352 to 362 the composition is skewed to polar residues; it reads IVSSGNITSSS.

It belongs to the G-protein coupled receptor 1 family.

The protein localises to the cell membrane. In terms of biological role, G-protein coupled receptor for the bioactive lysosphingolipid sphingosine 1-phosphate (S1P) that seems to be coupled to the G(i) subclass of heteromeric G proteins. Signaling leads to the activation of RAC1, SRC, PTK2/FAK1 and MAP kinases. Plays an important role in cell migration, probably via its role in the reorganization of the actin cytoskeleton and the formation of lamellipodia in response to stimuli that increase the activity of the sphingosine kinase SPHK1. Required for normal chemotaxis toward sphingosine 1-phosphate. The chain is Sphingosine 1-phosphate receptor 1 (s1pr1) from Danio rerio (Zebrafish).